The chain runs to 487 residues: Proline--tRNA ligase (487 aa).

This sequence belongs to the class-II aminoacyl-tRNA synthetase family. ProS type 3 subfamily. Homodimer.

The protein localises to the cytoplasm. The enzyme catalyses tRNA(Pro) + L-proline + ATP = L-prolyl-tRNA(Pro) + AMP + diphosphate. Catalyzes the attachment of proline to tRNA(Pro) in a two-step reaction: proline is first activated by ATP to form Pro-AMP and then transferred to the acceptor end of tRNA(Pro). The polypeptide is Proline--tRNA ligase (Pyrobaculum neutrophilum (strain DSM 2338 / JCM 9278 / NBRC 100436 / V24Sta) (Thermoproteus neutrophilus)).